A 355-amino-acid chain; its full sequence is Methylthioribose-1-phosphate isomerase (355 aa).

Substrate is bound by residues 53-55, Arg-96, and Gln-205; that span reads RGA. The active-site Proton donor is Asp-246. 256-257 contributes to the substrate binding site; it reads NK.

The protein belongs to the eIF-2B alpha/beta/delta subunits family. MtnA subfamily.

The enzyme catalyses 5-(methylsulfanyl)-alpha-D-ribose 1-phosphate = 5-(methylsulfanyl)-D-ribulose 1-phosphate. It participates in amino-acid biosynthesis; L-methionine biosynthesis via salvage pathway; L-methionine from S-methyl-5-thio-alpha-D-ribose 1-phosphate: step 1/6. In terms of biological role, catalyzes the interconversion of methylthioribose-1-phosphate (MTR-1-P) into methylthioribulose-1-phosphate (MTRu-1-P). In Thermosynechococcus vestitus (strain NIES-2133 / IAM M-273 / BP-1), this protein is Methylthioribose-1-phosphate isomerase.